The chain runs to 151 residues: Small ribosomal subunit protein uS15 (151 aa).

Residues Met-1 to Arg-16 are compositionally biased toward basic residues. The segment at Met-1–Pro-20 is disordered.

Belongs to the universal ribosomal protein uS15 family. In terms of assembly, part of the 30S ribosomal subunit.

The protein is Small ribosomal subunit protein uS15 of Pyrobaculum aerophilum (strain ATCC 51768 / DSM 7523 / JCM 9630 / CIP 104966 / NBRC 100827 / IM2).